Here is a 389-residue protein sequence, read N- to C-terminus: S-adenosylmethionine synthase (389 aa).

Residue H17 coordinates ATP. D19 contacts Mg(2+). Residue E45 coordinates K(+). Positions 58 and 101 each coordinate L-methionine. The interval 101–111 is flexible loop; sequence QSPDISQGVTE. Residues 168-170, 234-235, D243, 249-250, A266, and K270 each bind ATP; these read DSK, RF, and RK. Residue D243 coordinates L-methionine. K274 is a binding site for L-methionine.

It belongs to the AdoMet synthase family. Homotetramer; dimer of dimers. Mg(2+) serves as cofactor. The cofactor is K(+).

It is found in the cytoplasm. It catalyses the reaction L-methionine + ATP + H2O = S-adenosyl-L-methionine + phosphate + diphosphate. It participates in amino-acid biosynthesis; S-adenosyl-L-methionine biosynthesis; S-adenosyl-L-methionine from L-methionine: step 1/1. In terms of biological role, catalyzes the formation of S-adenosylmethionine (AdoMet) from methionine and ATP. The overall synthetic reaction is composed of two sequential steps, AdoMet formation and the subsequent tripolyphosphate hydrolysis which occurs prior to release of AdoMet from the enzyme. This chain is S-adenosylmethionine synthase, found in Syntrophotalea carbinolica (strain DSM 2380 / NBRC 103641 / GraBd1) (Pelobacter carbinolicus).